A 544-amino-acid polypeptide reads, in one-letter code: Membrane protein insertase YidC (544 aa).

Residues 6-26 (NLLLIALLFVTFMLWQAWETD) traverse the membrane as a helical segment. Positions 112 to 132 (SGLTGKNGPDNPANGPRPLFT) are disordered. 4 helical membrane-spanning segments follow: residues 343-363 (KFLHGFIGNWGFSIIAITFIV), 418-438 (LGGCFPLLIQMPIFLALYYML), 456-476 (LSAQDPYYILPILMGVTMFFI), and 497-517 (PVIFTVFFLWFPSGLVMYYIV).

Belongs to the OXA1/ALB3/YidC family. Type 1 subfamily. Interacts with the Sec translocase complex via SecD. Specifically interacts with transmembrane segments of nascent integral membrane proteins during membrane integration.

The protein resides in the cell inner membrane. Required for the insertion and/or proper folding and/or complex formation of integral membrane proteins into the membrane. Involved in integration of membrane proteins that insert both dependently and independently of the Sec translocase complex, as well as at least some lipoproteins. Aids folding of multispanning membrane proteins. The protein is Membrane protein insertase YidC of Pectobacterium carotovorum subsp. carotovorum (strain PC1).